We begin with the raw amino-acid sequence, 681 residues long: LLNKDVLSSTLASILALHKWGLGQHHIAKGLHFLELNFASATDNSQITPLGFDIVFPAMLDHAADLSLNLRLDPTTLNDLMNRRDLELQRCTENGSAETEVYMAYIGEGMGKLHDWESVMKYQRKNGSLFNSPSTTAAAFIALRNSDCLNYLYSALNKFGSAVPAVYPLDIYSQLCIVDNLERLGISRFFSTEIQSVLDETYRCWLQGDEEIFMDASTCGLAFRTLRMNGYNVTSDPITKILQECFSSSFRGNMTDINTTLEIYRASELILYPEERDLDQHNLRLKTFLEQELSSNGFIQSCQLGRNINAEVNQAIEYPFYAIMDRMAKRKNIENYNIDNTRILKTSYRSPNFGNKDFLSLSVEDFNRCQVIHREELRELERWVIENRLDELKFARSKAAYCYFSAAATIFSPELSDARMSWAKNALMTTMVDDLFDVTGSVEEMKNLIQLVELWDVDVSTECCSHKVQILFSALKRTICEVGDRAYQLQGRSIRSHIIVIWLDTLHSMMKEVEWTRDKFVPTMDEYVSNAYVSFALGPIVLPALYLVGPKLSEEMVNHSEYHNLFKLMSTCGRLMNDIRGYEREHDDGKLNAMSLYIMNNGGEITPEVAILEIKSWNDRQRRDLLSLVLEEKSVIPKACKDLFWHMCSVVHLFYNKDDGFWSQELIEVVNQVIHQPILLN.

Positions 433, 437, 577, and 585 each coordinate Mg(2+). Residues 433–437 carry the DDXXD motif motif; that stretch reads DDLFD.

This sequence belongs to the terpene synthase family. Mg(2+) is required as a cofactor. As to expression, expressed in leaves.

The protein resides in the plastid. The protein localises to the chloroplast. It functions in the pathway secondary metabolite biosynthesis; terpenoid biosynthesis. Its function is as follows. May be involved in the biosynthesis of ent-kaurene diterpenoids natural products such as oridonin, miltiradiene, eriocalyxin B and nezukol, known to exhibit antitumor, anti-inflammatory and antibacterial activities. The polypeptide is Terpene synthase 6, chloroplastic (Isodon rubescens (Rabdosia rubescens)).